We begin with the raw amino-acid sequence, 402 residues long: MSNHMSIMKFLNQILCLSLILSISMTTLSFAQTCSKYKFSSNNVFDSCNDLPFLDSFLHYTYESSTGSLHIAYRHTKLTSGKWVAWAVNPTSTGMVGAQAIVAYPQSDGTVRVYTSPIRSYQTSLLEGDLSFNVSGLSATYQNNEIVVLASLKLAQDLGNGGTINTVWQDGSMSGNSLLPHPTSGNNVRSVSTLNLVSGVSAAAGGAGGSSKLRKRNIHGILNGVSWGIMMPLGAIIARYLRVAKSADPAWFYIHVFCQASAYIIGVAGWATGLKLGGDSPGIQYSTHRAIGIALFSLATVQVFAMFLRPKPEHKHRLYWNIYHHTIGYTIIILGVVNVFKGLGILSPKKQWKNAYIGIIVVLAIVATLLEAFTWYVVIKRRKLEAKTAQHGASNGTRSQYA.

Residues 1–31 (MSNHMSIMKFLNQILCLSLILSISMTTLSFA) form the signal peptide. The DOMON domain occupies 54–171 (LDSFLHYTYE…GTINTVWQDG (118 aa)). The 197-residue stretch at 183–379 (TSGNNVRSVS…LEAFTWYVVI (197 aa)) folds into the Cytochrome b561 domain. A run of 2 helical transmembrane segments spans residues 218 to 238 (IHGI…AIIA) and 250 to 270 (AWFY…VAGW). Heme b is bound by residues H219, H255, and H288. The helical transmembrane segment at 290–310 (AIGIALFSLATVQVFAMFLRP) threads the bilayer. Residue H324 participates in heme b binding. Transmembrane regions (helical) follow at residues 326-346 (TIGY…LGIL) and 359-379 (IIVV…YVVI).

Heme b serves as cofactor.

It is found in the membrane. In terms of biological role, may act as a catecholamine-responsive trans-membrane electron transporter. This Arabidopsis thaliana (Mouse-ear cress) protein is Cytochrome b561 and DOMON domain-containing protein At4g17280.